The following is a 23-amino-acid chain: Unknown protein 1 (23 aa).

The polypeptide is Unknown protein 1 (Coniferiporia sulphurascens (Laminated root rot fungus)).